Reading from the N-terminus, the 494-residue chain is Cobyric acid synthase (494 aa).

Residues 248–445 (ELEIAVLKLP…LHGIFDNGPW (198 aa)) form the GATase cobBQ-type domain. Catalysis depends on C329, which acts as the Nucleophile. The active site involves H437.

This sequence belongs to the CobB/CobQ family. CobQ subfamily.

Its pathway is cofactor biosynthesis; adenosylcobalamin biosynthesis. Functionally, catalyzes amidations at positions B, D, E, and G on adenosylcobyrinic A,C-diamide. NH(2) groups are provided by glutamine, and one molecule of ATP is hydrogenolyzed for each amidation. The polypeptide is Cobyric acid synthase (Synechococcus sp. (strain WH7803)).